Here is a 202-residue protein sequence, read N- to C-terminus: ATP-dependent Clp protease proteolytic subunit (202 aa).

Residue Ser-106 is the Nucleophile of the active site. Residue His-131 is part of the active site.

It belongs to the peptidase S14 family. As to quaternary structure, fourteen ClpP subunits assemble into 2 heptameric rings which stack back to back to give a disk-like structure with a central cavity, resembling the structure of eukaryotic proteasomes.

The protein localises to the cytoplasm. It catalyses the reaction Hydrolysis of proteins to small peptides in the presence of ATP and magnesium. alpha-casein is the usual test substrate. In the absence of ATP, only oligopeptides shorter than five residues are hydrolyzed (such as succinyl-Leu-Tyr-|-NHMec, and Leu-Tyr-Leu-|-Tyr-Trp, in which cleavage of the -Tyr-|-Leu- and -Tyr-|-Trp bonds also occurs).. Cleaves peptides in various proteins in a process that requires ATP hydrolysis. Has a chymotrypsin-like activity. Plays a major role in the degradation of misfolded proteins. The sequence is that of ATP-dependent Clp protease proteolytic subunit from Shewanella sp. (strain ANA-3).